Here is a 244-residue protein sequence, read N- to C-terminus: MNLEGKVALVTGASRGIGKAIAELLAERGAKVIGTATSESGAQAISDYLGDNGKGMALNVTNPESIEAVLKAITDEFGGVDILVNNAGITRDNLLMRMKEEEWSDIMETNLTSIFRLSKAVLRGMMKKRQGRIINVGSVVGTMGNAGQANYAAAKAGVIGFTKSMAREVASRGVTVNTVAPGFIETDMTKALNDEQRTATLAQVPAGRLGDPREIASAVAFLASPEAAYITGETLHVNGGMYMI.

NADP(+) is bound by residues 12–15 (GASR), Thr37, 59–60 (NV), and Asn86. A substrate-binding site is contributed by Ser138. Catalysis depends on Tyr151, which acts as the Proton acceptor. NADP(+)-binding positions include 151 to 155 (YAAAK) and Ile184.

The protein belongs to the short-chain dehydrogenases/reductases (SDR) family. Homotetramer.

The enzyme catalyses a (3R)-hydroxyacyl-[ACP] + NADP(+) = a 3-oxoacyl-[ACP] + NADPH + H(+). It functions in the pathway lipid metabolism; fatty acid biosynthesis. Its function is as follows. Catalyzes the NADPH-dependent reduction of beta-ketoacyl-ACP substrates to beta-hydroxyacyl-ACP products, the first reductive step in the elongation cycle of fatty acid biosynthesis. The protein is 3-oxoacyl-[acyl-carrier-protein] reductase FabG (fabG) of Vibrio cholerae serotype O1 (strain ATCC 39315 / El Tor Inaba N16961).